The sequence spans 267 residues: MPVIDIIFRVDEICKKYDKYDIDKHREIGASGDDAFSRLFTSIDSDIEAVLRKAELASTEKNRAAAVAMNAEVRRTKARLAEDVVKLQKLAVKKIKGLTREERESRCDLVIALADRLQAIPDGNEHGAKQANSDWGGASAPNKNIKFDMSEEDMDDGFFQQSEESSQFRQEYEMRRKKQDEGLDIISEGLDALKNLARDMNEELDKQVPLMEEMETKVDGATSDLKNTNVRLKKQLVQMRSSRNFCIDIILLCVILGIVSYIYNALN.

The Cytoplasmic segment spans residues 1–244; the sequence is MPVIDIIFRV…QLVQMRSSRN (244 aa). Positions 53–87 form a coiled coil; it reads KAELASTEKNRAAAVAMNAEVRRTKARLAEDVVKL. The region spanning 173–235 is the t-SNARE coiled-coil homology domain; the sequence is EMRRKKQDEG…KNTNVRLKKQ (63 aa). A helical; Anchor for type IV membrane protein transmembrane segment spans residues 245–265; it reads FCIDIILLCVILGIVSYIYNA. The Vesicular portion of the chain corresponds to 266–267; it reads LN.

This sequence belongs to the syntaxin family. In terms of assembly, part of the t-SNARE complex. As to expression, expressed in root, leaf, stem, flower and silique.

It localises to the membrane. Functionally, vesicle trafficking protein that functions in the secretory pathway. The chain is Syntaxin-72 (SYP72) from Arabidopsis thaliana (Mouse-ear cress).